Consider the following 566-residue polypeptide: Proline--tRNA ligase 1 (566 aa).

This sequence belongs to the class-II aminoacyl-tRNA synthetase family. ProS type 1 subfamily. In terms of assembly, homodimer.

It is found in the cytoplasm. It catalyses the reaction tRNA(Pro) + L-proline + ATP = L-prolyl-tRNA(Pro) + AMP + diphosphate. Functionally, catalyzes the attachment of proline to tRNA(Pro) in a two-step reaction: proline is first activated by ATP to form Pro-AMP and then transferred to the acceptor end of tRNA(Pro). As ProRS can inadvertently accommodate and process non-cognate amino acids such as alanine and cysteine, to avoid such errors it has two additional distinct editing activities against alanine. One activity is designated as 'pretransfer' editing and involves the tRNA(Pro)-independent hydrolysis of activated Ala-AMP. The other activity is designated 'posttransfer' editing and involves deacylation of mischarged Ala-tRNA(Pro). The misacylated Cys-tRNA(Pro) is not edited by ProRS. In Bacillus cereus (strain ZK / E33L), this protein is Proline--tRNA ligase 1.